We begin with the raw amino-acid sequence, 424 residues long: UPF0597 protein Sputcn32_1209 (424 aa).

Belongs to the UPF0597 family.

This is UPF0597 protein Sputcn32_1209 from Shewanella putrefaciens (strain CN-32 / ATCC BAA-453).